A 365-amino-acid chain; its full sequence is tRNA(Met) cytidine acetate ligase (365 aa).

ATP contacts are provided by residues 7 to 20, Gly96, Asn152, and Arg175; that span reads IAEF…HKYL.

It belongs to the TmcAL family.

Its subcellular location is the cytoplasm. It catalyses the reaction cytidine(34) in elongator tRNA(Met) + acetate + ATP = N(4)-acetylcytidine(34) in elongator tRNA(Met) + AMP + diphosphate. Its function is as follows. Catalyzes the formation of N(4)-acetylcytidine (ac(4)C) at the wobble position of elongator tRNA(Met), using acetate and ATP as substrates. First activates an acetate ion to form acetyladenylate (Ac-AMP) and then transfers the acetyl group to tRNA to form ac(4)C34. The polypeptide is tRNA(Met) cytidine acetate ligase (Streptococcus pneumoniae serotype 19F (strain G54)).